Consider the following 269-residue polypeptide: Hydroxyacylglutathione hydrolase (269 aa).

His56, His58, Asp60, His61, His115, Asp137, and His177 together coordinate Zn(2+).

It belongs to the metallo-beta-lactamase superfamily. Glyoxalase II family. Monomer. Requires Zn(2+) as cofactor.

It carries out the reaction an S-(2-hydroxyacyl)glutathione + H2O = a 2-hydroxy carboxylate + glutathione + H(+). Its pathway is secondary metabolite metabolism; methylglyoxal degradation; (R)-lactate from methylglyoxal: step 2/2. Functionally, thiolesterase that catalyzes the hydrolysis of S-D-lactoyl-glutathione to form glutathione and D-lactic acid. The polypeptide is Hydroxyacylglutathione hydrolase (Leptospira borgpetersenii serovar Hardjo-bovis (strain JB197)).